A 687-amino-acid chain; its full sequence is Light-independent protochlorophyllide reductase subunit B (687 aa).

Aspartate 36 serves as a coordination point for [4Fe-4S] cluster. Aspartate 441 acts as the Proton donor in catalysis. A substrate-binding site is contributed by 576–577 (GM).

The protein belongs to the ChlB/BchB/BchZ family. Protochlorophyllide reductase is composed of three subunits; ChlL, ChlN and ChlB. Forms a heterotetramer of two ChlB and two ChlN subunits. Requires [4Fe-4S] cluster as cofactor.

Its subcellular location is the plastid. It is found in the chloroplast. It catalyses the reaction chlorophyllide a + oxidized 2[4Fe-4S]-[ferredoxin] + 2 ADP + 2 phosphate = protochlorophyllide a + reduced 2[4Fe-4S]-[ferredoxin] + 2 ATP + 2 H2O. Its pathway is porphyrin-containing compound metabolism; chlorophyll biosynthesis (light-independent). Component of the dark-operative protochlorophyllide reductase (DPOR) that uses Mg-ATP and reduced ferredoxin to reduce ring D of protochlorophyllide (Pchlide) to form chlorophyllide a (Chlide). This reaction is light-independent. The NB-protein (ChlN-ChlB) is the catalytic component of the complex. The polypeptide is Light-independent protochlorophyllide reductase subunit B (Chlamydomonas reinhardtii (Chlamydomonas smithii)).